Reading from the N-terminus, the 275-residue chain is NH(3)-dependent NAD(+) synthetase (275 aa).

An ATP-binding site is contributed by 47–54; that stretch reads GISGGQDS. Position 53 (D53) interacts with Mg(2+). Position 141 (R141) interacts with deamido-NAD(+). T161 is a binding site for ATP. E166 is a binding site for Mg(2+). Deamido-NAD(+) is bound by residues K174 and D181. 2 residues coordinate ATP: K190 and T212. 261–262 is a binding site for deamido-NAD(+); that stretch reads HK.

This sequence belongs to the NAD synthetase family. As to quaternary structure, homodimer.

The enzyme catalyses deamido-NAD(+) + NH4(+) + ATP = AMP + diphosphate + NAD(+) + H(+). Its pathway is cofactor biosynthesis; NAD(+) biosynthesis; NAD(+) from deamido-NAD(+) (ammonia route): step 1/1. In terms of biological role, catalyzes the ATP-dependent amidation of deamido-NAD to form NAD. Uses ammonia as a nitrogen source. This Lactiplantibacillus plantarum (strain ATCC BAA-793 / NCIMB 8826 / WCFS1) (Lactobacillus plantarum) protein is NH(3)-dependent NAD(+) synthetase.